Reading from the N-terminus, the 1135-residue chain is MAANEKMEVTVKTLDSQTRTFTVETEISVKDFKAHISSDVGISPEKQRLIYQGRVLQEDKKLKEYNVDGKVIHLVERAPPQTQPSTGGPSTSSSTSPTSSNAAPVPGAPERNGNSYVMVGTFNLPHVMSGLVRQQRPSVSTVNGNDGSTLDVHINLDQQLPVQSEPRVRLVLAQHILQDIQRILDRLEGQAVNEQAAEPMDTAESEGEASSRETLPQTTQNTDGQSNTTPTSHPSPSEYVEVLQSLSRVEERLAPFMQRYREILSSATSDAYENQEEREQSQRIINLVGESLRLLGNALVAVSDLRCNLSSASPRHLHVVRPMSHYSGPMLLQQAAIPIQINVGTTVTATGNGTHAGHMPSDGNAAQPPSTNTSEPQRPNTENQPPSNGERPASDAPPTSVPHPHPRVIRITHQTVEPVMMMHMNIQDSASGGPTTIPPPTAGHGGSAHIHMPGLPPEFMQAISHQITQQAMAAASGQQIPGFQAPPRFVFTRPAAPSFQFQPGTATTPPGPGGATTTVPGATVGPAGNASLAQMISGLVGQLLMHPVVVAQGGSSTSSSTSSSTFTSTSSSASSSSSTDTTSTTTTSSTANPTVSSVPSSQPPPGTDQHLSQLLGSLLGTASSGMSNITMGSPSITVTVPGMPAFLQGVTDILQATQTVPVSTAPTQSASQAPPPSSPPPPPAHSSPPPAAAPESLPPEFFTSVVQGVLSSMLGSLSAADQSGTESIAAFIQRLSGTHNIFQPDAEGPGGFFGDLLTLICHNFSLVDMVMLLHGHSQPLQNLQPQLRSFFLQEYLHQVDPTPNNIQMASRNLTNGLEEYIRESFASVTVRDDVDITRTNIEFLQDQFNRITTHILHCADSTFGQRLLEMCNQSLFEWLALNLYCLRGDQNALTSVINERIRRLSLDVSPVLVSWVTSVLSLRLQVLLGQMPVTEGEIQRHVRRVGDAPQVPEPSSQEQPMETMPVDCQNGAASPVLATHSGGVLFLPPQSSVPTICPDSDHPTQEDGGSEQWAASVPPEWVPVIRQDMQNQRKIKQQPPLSDAYLSGMPAKRRKTMQGEGPHLSLSEAVSRAMKATGAKPESSAECVRRELDNSEAQGRYREQLCQDIQKTLQDNESYSAQRFPNTQRAFRGDP.

The region spanning 7 to 82 (MEVTVKTLDS…HLVERAPPQT (76 aa)) is the Ubiquitin-like domain. 8 disordered regions span residues 76–114 (ERAPPQTQPSTGGPSTSSSTSPTSSNAAPVPGAPERNGN), 194–238 (EQAA…SPSE), 350–407 (TGNG…PHPR), 498–522 (SFQFQPGTATTPPGPGGATTTVPGA), 552–612 (QGGS…QHLS), 661–698 (PVSTAPTQSASQAPPPSSPPPPPAHSSPPPAAAPESLP), 1075–1099 (KATGAKPESSAECVRRELDNSEAQG), and 1116–1135 (NESYSAQRFPNTQRAFRGDP). Low complexity predominate over residues 79 to 100 (PPQTQPSTGGPSTSSSTSPTSS). The segment covering 212-227 (RETLPQTTQNTDGQSN) has biased composition (polar residues). Over residues 228 to 237 (TTPTSHPSPS) the composition is skewed to low complexity. Positions 367–387 (QPPSTNTSEPQRPNTENQPPS) are enriched in polar residues. 2 stretches are compositionally biased toward low complexity: residues 555 to 600 (SSTS…SVPS) and 663 to 672 (STAPTQSASQ). Residues 673-692 (APPPSSPPPPPAHSSPPPAA) show a composition bias toward pro residues. The span at 1087 to 1099 (CVRRELDNSEAQG) shows a compositional bias: basic and acidic residues. The span at 1116–1129 (NESYSAQRFPNTQR) shows a compositional bias: polar residues.

Component of the bag6/bat3 complex.

It is found in the cytoplasm. The protein localises to the cytosol. The protein resides in the nucleus. Its subcellular location is the secreted. It localises to the extracellular exosome. Its function is as follows. ATP-independent molecular chaperone preventing the aggregation of misfolded and hydrophobic patches-containing proteins. Functions as part of a cytosolic protein quality control complex, the bag6/bat3 complex, which maintains these client proteins in a soluble state and participates in their proper delivery to the endoplasmic reticulum or alternatively can promote their sorting to the proteasome where they undergo degradation. The bag6/bat3 complex is involved in the post-translational delivery of tail-anchored/type II transmembrane proteins to the endoplasmic reticulum membrane. Similarly, the bag6/bat3 complex also functions as a sorting platform for proteins of the secretory pathway that are mislocalized to the cytosol either delivering them to the proteasome for degradation or to the endoplasmic reticulum. The bag6/bat3 complex also plays a role in the endoplasmic reticulum-associated degradation (ERAD), a quality control mechanism that eliminates unwanted proteins of the endoplasmic reticulum through their retrotranslocation to the cytosol and their targeting to the proteasome. It maintains these retrotranslocated proteins in an unfolded yet soluble state condition in the cytosol to ensure their proper delivery to the proteasome. Also required for selective ubiquitin-mediated degradation of defective nascent chain polypeptides by the proteasome. Also involved in endoplasmic reticulum stress-induced pre-emptive quality control, a mechanism that selectively attenuates the translocation of newly synthesized proteins into the endoplasmic reticulum and reroutes them to the cytosol for proteasomal degradation. May ensure the proper degradation of these proteins and thereby protects the endoplasmic reticulum from protein overload upon stress. By stabilizing a large spectrum of proteins, may indirectly affect different biological processes including apoptosis. By controlling the steady-state expression of the IGF1R receptor, indirectly regulates the insulin-like growth factor receptor signaling pathway. Functionally, when nuclear, may also act as a component of some chromatin regulator complex. The chain is Large proline-rich protein bag6-A from Xenopus laevis (African clawed frog).